The chain runs to 238 residues: DnaA regulatory inactivator Hda (238 aa).

Belongs to the DnaA family. HdA subfamily. As to quaternary structure, the active form seems to be an ADP-bound monomer. Forms the RIDA complex (regulatory inactivation of DnaA) of ATP-DnaA, ADP-Hda and the DNA-loaded beta sliding clamp (dnaN).

Its function is as follows. Mediates the interaction of DNA replication initiator protein DnaA with DNA polymerase subunit beta sliding clamp (dnaN). Stimulates hydrolysis of ATP-DnaA to ADP-DnaA, rendering DnaA inactive for reinitiation, a process called regulatory inhibition of DnaA or RIDA. This is DnaA regulatory inactivator Hda from Pectobacterium atrosepticum (strain SCRI 1043 / ATCC BAA-672) (Erwinia carotovora subsp. atroseptica).